We begin with the raw amino-acid sequence, 99 residues long: Integration host factor subunit alpha (99 aa).

Residues 49-70 form a disordered region; the sequence is FGNFDLRDKNQRPGRNPKTGED.

Belongs to the bacterial histone-like protein family. In terms of assembly, heterodimer of an alpha and a beta chain.

This protein is one of the two subunits of integration host factor, a specific DNA-binding protein that functions in genetic recombination as well as in transcriptional and translational control. This is Integration host factor subunit alpha from Cronobacter sakazakii (strain ATCC BAA-894) (Enterobacter sakazakii).